Consider the following 1087-residue polypeptide: Exoglucanase XynX (1087 aa).

The signal sequence occupies residues 1 to 30 (MKNNLSKFVSIFTAFIMIFGTSLFFPHVSA). Positions 37–188 (ANLVSNGDFE…YIDDVVVTPQ (152 aa)) constitute a CBM-cenC domain. Residues 204-527 (QNDIPDLSSV…KPAYWAIADP (324 aa)) form the GH10 domain. The active-site Proton donor is the E347. The active site involves D389. E452 (nucleophile) is an active-site residue. 3 consecutive SLH domains span residues 903-966 (KKSV…YNGE), 967-1025 (FSDV…KEEN), and 1028-1087 (ATSF…SNNL).

The protein belongs to the glycosyl hydrolase 10 (cellulase F) family.

It catalyses the reaction Hydrolysis of (1-&gt;4)-beta-D-glucosidic linkages in cellulose and cellotetraose, releasing cellobiose from the non-reducing ends of the chains.. This is Exoglucanase XynX (xynX) from Acetivibrio thermocellus (Hungateiclostridium thermocellum).